Consider the following 168-residue polypeptide: Probable prefoldin subunit 5 (168 aa).

This sequence belongs to the prefoldin subunit alpha family. Heterohexamer of two PFD-alpha type and four PFD-beta type subunits.

Its function is as follows. Binds specifically to cytosolic chaperonin (c-CPN) and transfers target proteins to it. Binds to nascent polypeptide chain and promotes folding in an environment in which there are many competing pathways for nonnative proteins. The protein is Probable prefoldin subunit 5 of Drosophila melanogaster (Fruit fly).